A 335-amino-acid polypeptide reads, in one-letter code: MKRIAIDAMGGDNAPKAIVEGVNQAIEAFSDIEIQLYGDQTKINSYLIQSDRVAIIHTDEKIMSDDEPAKAVRRKKKASMVLAAKAVKEGKADAIISAGNTGALLAVGLFVVGRIKGVDRPGLLSTIPTVTGLGFDMLDLGANAENTAKHLHQYAILGSFYAKNVRGIANPRVGLLNNGTEETKGDPLRKATYELLTADNTISFVGNVEARELMSGVADVIVSDGFTGNAVLKSIEGTAISIMGQLKQIINSGGIKTKIGASLLKSSLYEMRKTLDYSSAGGAVLFGLKAPVVKSHGSSDVKAIFSTIKQVRTMLDTNVVGQLVEEFAKETQVND.

This sequence belongs to the PlsX family. In terms of assembly, homodimer. Probably interacts with PlsY.

The protein resides in the cytoplasm. The enzyme catalyses a fatty acyl-[ACP] + phosphate = an acyl phosphate + holo-[ACP]. Its pathway is lipid metabolism; phospholipid metabolism. Functionally, catalyzes the reversible formation of acyl-phosphate (acyl-PO(4)) from acyl-[acyl-carrier-protein] (acyl-ACP). This enzyme utilizes acyl-ACP as fatty acyl donor, but not acyl-CoA. This chain is Phosphate acyltransferase, found in Streptococcus pyogenes serotype M28 (strain MGAS6180).